We begin with the raw amino-acid sequence, 389 residues long: S-adenosylmethionine synthase (389 aa).

H17 contacts ATP. D19 contacts Mg(2+). E45 contacts K(+). Positions 58 and 101 each coordinate L-methionine. The flexible loop stretch occupies residues 101–111; that stretch reads QSPDISQGVTE. Residues 168-170, 234-235, D243, 249-250, A266, and K270 each bind ATP; these read DSK, RF, and RK. L-methionine is bound at residue D243. K274 contributes to the L-methionine binding site.

It belongs to the AdoMet synthase family. In terms of assembly, homotetramer; dimer of dimers. Mg(2+) serves as cofactor. K(+) is required as a cofactor.

It is found in the cytoplasm. The enzyme catalyses L-methionine + ATP + H2O = S-adenosyl-L-methionine + phosphate + diphosphate. It participates in amino-acid biosynthesis; S-adenosyl-L-methionine biosynthesis; S-adenosyl-L-methionine from L-methionine: step 1/1. Catalyzes the formation of S-adenosylmethionine (AdoMet) from methionine and ATP. The overall synthetic reaction is composed of two sequential steps, AdoMet formation and the subsequent tripolyphosphate hydrolysis which occurs prior to release of AdoMet from the enzyme. This chain is S-adenosylmethionine synthase, found in Geobacter sulfurreducens (strain ATCC 51573 / DSM 12127 / PCA).